Reading from the N-terminus, the 150-residue chain is CCAAT/enhancer-binding protein gamma (150 aa).

A Glycyl lysine isopeptide (Lys-Gly) (interchain with G-Cter in SUMO2) cross-link involves residue Lys-3. The interval 27–94 (GLQQVPQLVP…QKAQDTLQRV (68 aa)) is disordered. Low complexity predominate over residues 28 to 37 (LQQVPQLVPA). Residues 56-72 (SPMDRNSDEYRQRRERN) are compositionally biased toward basic and acidic residues. A bZIP domain is found at 62-125 (SDEYRQRRER…SVLKDLFLEH (64 aa)). Residues 66-93 (RQRRERNNMAVKKSRLKSKQKAQDTLQR) form a basic motif region. The tract at residues 97–118 (LKEENERLEAKIKLLTKELSVL) is leucine-zipper. Residues 129–150 (LADNVQPISTETTATNSDNPGQ) are disordered. A compositionally biased stretch (polar residues) spans 134–150 (QPISTETTATNSDNPGQ).

It belongs to the bZIP family. C/EBP subfamily. As to quaternary structure, binds DNA as a dimer and can form stable heterodimers with CEBPA. Can form stable heterodimers with CEBPB. Interacts with ZNF638; this interaction increases transcriptional activation. In terms of tissue distribution, ubiquitous.

Its subcellular location is the nucleus. In terms of biological role, transcription factor that binds to the promoter and the enhancer regions of target genes. Binds to the promoter and the enhancer of the immunoglobulin heavy chain. Binds to GPE1, a cis-acting element in the G-CSF gene promoter. Binds to the enhancer element PRE-I (positive regulatory element-I) of the IL-4 gene. Binds to the promoter and the enhancer of the alpha-1-fetoprotein gene. The polypeptide is CCAAT/enhancer-binding protein gamma (Cebpg) (Mus musculus (Mouse)).